Reading from the N-terminus, the 198-residue chain is Pyridoxal 5'-phosphate synthase subunit PdxT (198 aa).

Position 49–51 (49–51) interacts with L-glutamine; sequence GES. The active-site Nucleophile is the Cys81. L-glutamine is bound by residues Arg112 and 140–141; that span reads IR. Active-site charge relay system residues include His176 and Glu178.

The protein belongs to the glutaminase PdxT/SNO family. In the presence of PdxS, forms a dodecamer of heterodimers. Only shows activity in the heterodimer.

The enzyme catalyses aldehydo-D-ribose 5-phosphate + D-glyceraldehyde 3-phosphate + L-glutamine = pyridoxal 5'-phosphate + L-glutamate + phosphate + 3 H2O + H(+). The catalysed reaction is L-glutamine + H2O = L-glutamate + NH4(+). It functions in the pathway cofactor biosynthesis; pyridoxal 5'-phosphate biosynthesis. Catalyzes the hydrolysis of glutamine to glutamate and ammonia as part of the biosynthesis of pyridoxal 5'-phosphate. The resulting ammonia molecule is channeled to the active site of PdxS. The chain is Pyridoxal 5'-phosphate synthase subunit PdxT from Methanocella arvoryzae (strain DSM 22066 / NBRC 105507 / MRE50).